Consider the following 290-residue polypeptide: Small ribosomal subunit biogenesis GTPase RsgA (290 aa).

One can recognise a CP-type G domain in the interval 62 to 213 (KNSLVRPPIV…IADTPGFSSL (152 aa)). GTP contacts are provided by residues 111 to 114 (SKLD) and 156 to 164 (GQTGVGKST). Residues Cys-237, Cys-242, His-244, and Cys-250 each coordinate Zn(2+).

It belongs to the TRAFAC class YlqF/YawG GTPase family. RsgA subfamily. As to quaternary structure, monomer. Associates with 30S ribosomal subunit, binds 16S rRNA. Zn(2+) serves as cofactor.

The protein localises to the cytoplasm. Functionally, one of several proteins that assist in the late maturation steps of the functional core of the 30S ribosomal subunit. Helps release RbfA from mature subunits. May play a role in the assembly of ribosomal proteins into the subunit. Circularly permuted GTPase that catalyzes slow GTP hydrolysis, GTPase activity is stimulated by the 30S ribosomal subunit. The polypeptide is Small ribosomal subunit biogenesis GTPase RsgA (Streptococcus agalactiae serotype III (strain NEM316)).